The following is a 519-amino-acid chain: ATP synthase subunit alpha, mitochondrial (519 aa).

188–195 (GDRQTGKS) contributes to the ATP binding site.

This sequence belongs to the ATPase alpha/beta chains family. F-type ATPases have 2 components, CF(1) - the catalytic core - and CF(0) - the membrane proton channel. CF(1) has five subunits: alpha(3), beta(3), gamma(1), delta(1), epsilon(1). CF(0) has three main subunits: a, b and c.

It localises to the mitochondrion. It is found in the mitochondrion inner membrane. In terms of biological role, mitochondrial membrane ATP synthase (F(1)F(0) ATP synthase or Complex V) produces ATP from ADP in the presence of a proton gradient across the membrane which is generated by electron transport complexes of the respiratory chain. F-type ATPases consist of two structural domains, F(1) - containing the extramembraneous catalytic core, and F(0) - containing the membrane proton channel, linked together by a central stalk and a peripheral stalk. During catalysis, ATP synthesis in the catalytic domain of F(1) is coupled via a rotary mechanism of the central stalk subunits to proton translocation. Subunits alpha and beta form the catalytic core in F(1). Rotation of the central stalk against the surrounding alpha(3)beta(3) subunits leads to hydrolysis of ATP in three separate catalytic sites on the beta subunits. Subunit alpha does not bear the catalytic high-affinity ATP-binding sites. This Dictyostelium citrinum (Slime mold) protein is ATP synthase subunit alpha, mitochondrial (atp1).